We begin with the raw amino-acid sequence, 257 residues long: MEVIPAIDLLDGRCVRLYQGDYQQSQVFSENPVEVARQWVEQGANRLHLVDLDGAKAGKPVNLSAIEAIVRAVSIPVQVGGGLRDRSSVAQLLNLGVNRVILGTIAVENPQLVQQLSQEFPGQIVVGIDAREGKVATRGWLETSEVQATELAQNMAHLGVAAIIYTDIHRDGTLKGPNIPALRELATAVNVPVIASGGVSSLTDLLSLLALEPSGVTGVIVGRALYTGEVDLSEAIQAVGQGRWQDIPPDLGSSAFA.

Aspartate 8 functions as the Proton acceptor in the catalytic mechanism. The active-site Proton donor is the aspartate 129.

This sequence belongs to the HisA/HisF family.

Its subcellular location is the cytoplasm. The catalysed reaction is 1-(5-phospho-beta-D-ribosyl)-5-[(5-phospho-beta-D-ribosylamino)methylideneamino]imidazole-4-carboxamide = 5-[(5-phospho-1-deoxy-D-ribulos-1-ylimino)methylamino]-1-(5-phospho-beta-D-ribosyl)imidazole-4-carboxamide. It functions in the pathway amino-acid biosynthesis; L-histidine biosynthesis; L-histidine from 5-phospho-alpha-D-ribose 1-diphosphate: step 4/9. This chain is 1-(5-phosphoribosyl)-5-[(5-phosphoribosylamino)methylideneamino] imidazole-4-carboxamide isomerase, found in Gloeothece citriformis (strain PCC 7424) (Cyanothece sp. (strain PCC 7424)).